Consider the following 263-residue polypeptide: Hydroxyethylthiazole kinase 1 (263 aa).

Substrate is bound at residue M42. 2 residues coordinate ATP: K118 and T164. Residue G191 participates in substrate binding.

Belongs to the Thz kinase family. Requires Mg(2+) as cofactor.

It carries out the reaction 5-(2-hydroxyethyl)-4-methylthiazole + ATP = 4-methyl-5-(2-phosphooxyethyl)-thiazole + ADP + H(+). It functions in the pathway cofactor biosynthesis; thiamine diphosphate biosynthesis; 4-methyl-5-(2-phosphoethyl)-thiazole from 5-(2-hydroxyethyl)-4-methylthiazole: step 1/1. Catalyzes the phosphorylation of the hydroxyl group of 4-methyl-5-beta-hydroxyethylthiazole (THZ). The polypeptide is Hydroxyethylthiazole kinase 1 (Clostridium botulinum (strain Okra / Type B1)).